The sequence spans 578 residues: MNLPAVLNGLLVSVVAALLWKYVRLVEHTSQLEEELQLTRQSQEFSQVRIDYHGALLALQEHGTRMVCTGKMHTDRICRFDYLCYCTEAEEFVFFHSNASVMLPNLGSRRFQPALLDLSSVEDHNTQYFNFLELPAAALKFMPKPVFVPDVTLILNRFNPDNLMHIFHDDLLPVYYTMQQYSDLDDEARLVFMEGWGEGAHFDLYRLLSSKQPLLKDQLKTFGKLMCFTKSYVGLSKMTTWYQYGFVQPQGPKANILISGNEIRQFASFLMERLNITREEEEEDDDYIVVFKRTTNRLILNEAELLLALAQEFQMRTVTVSLEEQSFDNIIQIISRAAMLVSMHGAQMITSMFLPRGAAVVELFPYGVNPEQYTPYKTLASLPGMDLQYVAWRNTMEENTVTFPDRPWDQGGIVHLEKEEQERILASKEVPRHLCCRNPEWLFRIYQDTTVDLASFLDVLRDGLKKLNLKKAKVASTVHPGRVREPKCQTSVQATNEAKLSVSWQIPWNLKYLKVKEVKYEVWIQEQGENTYMPYILPHQNYTFSENIKPFTTYLVWVRCIFNKNLLGPFADVLICKT.

Residues 1 to 4 are Cytoplasmic-facing; sequence MNLP. Residues 5-25 traverse the membrane as a helical; Signal-anchor for type II membrane protein segment; sequence AVLNGLLVSVVAALLWKYVRL. Topologically, residues 26 to 578 are lumenal; the sequence is VEHTSQLEEE…PFADVLICKT (553 aa). N-linked (GlcNAc...) asparagine glycosylation is found at Asn98, Asn275, and Asn541. The 97-residue stretch at 482 to 578 folds into the Fibronectin type-III domain; that stretch reads RVREPKCQTS…PFADVLICKT (97 aa).

This sequence belongs to the glycosyltransferase 61 family.

Its subcellular location is the endoplasmic reticulum membrane. It carries out the reaction 3-O-(alpha-D-mannosyl)-L-threonyl-[protein] + UDP-N-acetyl-alpha-D-glucosamine = 3-O-(N-acetyl-beta-D-glucosaminyl-(1-&gt;4)-alpha-D-mannosyl)-L-threonyl-[protein] + UDP + H(+). The protein operates within protein modification; protein glycosylation. Its function is as follows. O-linked mannose beta-1,4-N-acetylglucosaminyltransferase that transfers UDP-N-acetyl-D-glucosamine to the 4-position of the mannose to generate N-acetyl-D-glucosamine-beta-1,4-O-D-mannosylprotein. Involved in the biosynthesis of the phosphorylated O-mannosyl trisaccharide (N-acetylgalactosamine-beta-3-N-acetylglucosamine-beta-4-(phosphate-6-)mannose), a carbohydrate structure present in alpha-dystroglycan (DAG1), which is required for binding laminin G-like domain-containing extracellular proteins with high affinity. The protein is Protein O-linked-mannose beta-1,4-N-acetylglucosaminyltransferase 2 (pomgnt2) of Danio rerio (Zebrafish).